The following is a 316-amino-acid chain: Large ribosomal subunit protein uL10 (316 aa).

The tract at residues 282–316 (ASAAKADEPKKEEAKKVEEEEEEEEDGFMGFGMFD) is disordered. Positions 286–299 (KADEPKKEEAKKVE) are enriched in basic and acidic residues.

It belongs to the universal ribosomal protein uL10 family. As to quaternary structure, P0 forms a pentameric complex by interaction with dimers of P1 and P2. Phosphorylated.

Functionally, ribosomal protein P0 is the functional equivalent of E.coli protein L10. This chain is Large ribosomal subunit protein uL10 (RPLP0), found in Plasmodium falciparum (isolate 7G8).